Reading from the N-terminus, the 693-residue chain is C6 finger domain transcription factor nscR (693 aa).

The segment at residues 17 to 43 (CELCRERKVKCDKLDPCTNCSSAGVIC) is a DNA-binding region (zn(2)-C6 fungal-type). Residues 589 to 608 (AANTLSVPHTPPSRSSITSS) are disordered.

It localises to the nucleus. In terms of biological role, transcription factor that specifically regulates the neosartoricin B biosynthesis gene cluster. The sequence is that of C6 finger domain transcription factor nscR from Trichophyton rubrum (strain ATCC MYA-4607 / CBS 118892) (Athlete's foot fungus).